The chain runs to 460 residues: Cysteine--tRNA ligase (460 aa).

Cys-28 is a Zn(2+) binding site. A 'HIGH' region motif is present at residues 30–40 (VTIYDLCHIGH). The Zn(2+) site is built by Cys-209, His-234, and Glu-238. The short motif at 266-270 (KMSKS) is the 'KMSKS' region element. Lys-269 lines the ATP pocket.

Belongs to the class-I aminoacyl-tRNA synthetase family. In terms of assembly, monomer. Requires Zn(2+) as cofactor.

The protein resides in the cytoplasm. It carries out the reaction tRNA(Cys) + L-cysteine + ATP = L-cysteinyl-tRNA(Cys) + AMP + diphosphate. This Vibrio vulnificus (strain CMCP6) protein is Cysteine--tRNA ligase.